The following is a 444-amino-acid chain: Na(+)-translocating NADH-quinone reductase subunit A (444 aa).

The protein belongs to the NqrA family. As to quaternary structure, composed of six subunits; NqrA, NqrB, NqrC, NqrD, NqrE and NqrF.

It catalyses the reaction a ubiquinone + n Na(+)(in) + NADH + H(+) = a ubiquinol + n Na(+)(out) + NAD(+). Functionally, NQR complex catalyzes the reduction of ubiquinone-1 to ubiquinol by two successive reactions, coupled with the transport of Na(+) ions from the cytoplasm to the periplasm. NqrA to NqrE are probably involved in the second step, the conversion of ubisemiquinone to ubiquinol. This is Na(+)-translocating NADH-quinone reductase subunit A from Shewanella frigidimarina (strain NCIMB 400).